The following is a 186-amino-acid chain: Ribosome-recycling factor (186 aa).

The protein belongs to the RRF family.

The protein resides in the cytoplasm. In terms of biological role, responsible for the release of ribosomes from messenger RNA at the termination of protein biosynthesis. May increase the efficiency of translation by recycling ribosomes from one round of translation to another. This Brucella abortus (strain S19) protein is Ribosome-recycling factor.